Reading from the N-terminus, the 237-residue chain is Methylthioribulose-1-phosphate dehydratase (237 aa).

Cys98 serves as a coordination point for substrate. His116 and His118 together coordinate Zn(2+). The active-site Proton donor/acceptor is Glu140. A Zn(2+)-binding site is contributed by His196.

The protein belongs to the aldolase class II family. MtnB subfamily. The cofactor is Zn(2+).

It localises to the cytoplasm. It carries out the reaction 5-(methylsulfanyl)-D-ribulose 1-phosphate = 5-methylsulfanyl-2,3-dioxopentyl phosphate + H2O. The protein operates within amino-acid biosynthesis; L-methionine biosynthesis via salvage pathway; L-methionine from S-methyl-5-thio-alpha-D-ribose 1-phosphate: step 2/6. Its function is as follows. Catalyzes the dehydration of methylthioribulose-1-phosphate (MTRu-1-P) into 2,3-diketo-5-methylthiopentyl-1-phosphate (DK-MTP-1-P). This Laccaria bicolor (strain S238N-H82 / ATCC MYA-4686) (Bicoloured deceiver) protein is Methylthioribulose-1-phosphate dehydratase.